The sequence spans 113 residues: Iron-sulfur cluster insertion protein ErpA (113 aa).

Iron-sulfur cluster-binding residues include Cys41, Cys105, and Cys107.

It belongs to the HesB/IscA family. Homodimer. Iron-sulfur cluster is required as a cofactor.

Required for insertion of 4Fe-4S clusters for at least IspG. The polypeptide is Iron-sulfur cluster insertion protein ErpA (Mannheimia succiniciproducens (strain KCTC 0769BP / MBEL55E)).